The primary structure comprises 369 residues: Putative 2-aminoethylphosphonate import ATP-binding protein PhnT (369 aa).

The ABC transporter domain occupies 19–250 (IVLDSLRVAY…PPNRFASEFL (232 aa)). 51–58 (GPSGSGKT) contacts ATP.

The protein belongs to the ABC transporter superfamily. 2-aminoethylphosphonate importer (TC 3.A.1.11.5) family.

The protein localises to the cell inner membrane. Probably part of the PhnSTUV complex (TC 3.A.1.11.5) involved in 2-aminoethylphosphonate import. Probably responsible for energy coupling to the transport system. The chain is Putative 2-aminoethylphosphonate import ATP-binding protein PhnT (phnT) from Salmonella choleraesuis (strain SC-B67).